We begin with the raw amino-acid sequence, 1701 residues long: Coiled-coil domain-containing protein 180 (1701 aa).

Positions 1–35 (MRGGENRPPARVQSSSEELELRHQSLDAFPGRRLP) are disordered. The stretch at 171 to 198 (QRQAEHKRKSYESALASFQEEIAQVGKE) forms a coiled coil. Disordered stretches follow at residues 657–808 (EKPS…DKEE), 1272–1291 (HHCD…CGSR), and 1319–1354 (GFKR…KPNK). Residues 661–671 (QKRVKKLRKKQ) are compositionally biased toward basic residues. Over residues 672–682 (GSKEDMTRSEE) the composition is skewed to basic and acidic residues. The segment covering 683 to 692 (SISSGTSTAR) has biased composition (polar residues). The segment covering 696–705 (EVEEENDQEM) has biased composition (acidic residues). Residues 755 to 766 (ENVKGQGEKKEE) show a composition bias toward basic and acidic residues. Residues 757–804 (VKGQGEKKEESEEEDEKEEEEEEEKLEEEKEEKEAQEEQESLSVGEEE) adopt a coiled-coil conformation. Over residues 767–808 (SEEEDEKEEEEEEEKLEEEKEEKEAQEEQESLSVGEEEDKEE) the composition is skewed to acidic residues.

The protein is Coiled-coil domain-containing protein 180 (CCDC180) of Homo sapiens (Human).